A 255-amino-acid chain; its full sequence is Accessory gland-specific peptide 26Aa (255 aa).

The N-terminal stretch at 1 to 18 (MNLILLCSQILLLLFTVA) is a signal peptide. The tract at residues 86–110 (PINNSKSRKNSSTLPSQILTDKPNQ) is disordered. Positions 87-110 (INNSKSRKNSSTLPSQILTDKPNQ) are enriched in polar residues. N-linked (GlcNAc...) asparagine glycans are attached at residues Asn-88, Asn-95, and Asn-136. Disordered regions lie at residues 177-196 (NAQN…SKDI) and 235-255 (NNPA…PSTT). Over residues 183 to 192 (KSTKSCKKRP) the composition is skewed to basic residues. The span at 245–255 (KSPSEGNPSTT) shows a compositional bias: polar residues.

In terms of processing, it undergoes several cleavages as it is secreted and it is further processed in the recipient female. As to expression, main cells of the accessory glands of males.

The protein localises to the secreted. It localises to the extracellular space. Functionally, this protein is transferred from male to female's hemolymph during mating, affecting egglaying and behavior after mating. The chain is Accessory gland-specific peptide 26Aa (Acp26Aa) from Drosophila sechellia (Fruit fly).